Consider the following 399-residue polypeptide: Tryptophan synthase beta chain (399 aa).

Lysine 92 carries the post-translational modification N6-(pyridoxal phosphate)lysine.

Belongs to the TrpB family. In terms of assembly, tetramer of two alpha and two beta chains. It depends on pyridoxal 5'-phosphate as a cofactor.

The enzyme catalyses (1S,2R)-1-C-(indol-3-yl)glycerol 3-phosphate + L-serine = D-glyceraldehyde 3-phosphate + L-tryptophan + H2O. It functions in the pathway amino-acid biosynthesis; L-tryptophan biosynthesis; L-tryptophan from chorismate: step 5/5. Functionally, the beta subunit is responsible for the synthesis of L-tryptophan from indole and L-serine. In Bordetella pertussis (strain Tohama I / ATCC BAA-589 / NCTC 13251), this protein is Tryptophan synthase beta chain.